The chain runs to 231 residues: F-box protein SKIP8 (231 aa).

Residues 1–24 (MPSTPLANGGTPPMGGGERTTVTT) are disordered. Positions 34 to 80 (VSMMEQLVPEITTHALSYLDYPSLCRLSMTNSLMRKAANDDNAWKAL) constitute an F-box domain.

Part of a SCF (ASK-cullin-F-box) protein ligase complex. Interacts with SKP1A/ASK1.

Its pathway is protein modification; protein ubiquitination. Functionally, component of SCF(ASK-cullin-F-box) E3 ubiquitin ligase complexes, which may mediate the ubiquitination and subsequent proteasomal degradation of target proteins. The polypeptide is F-box protein SKIP8 (SKIP8) (Arabidopsis thaliana (Mouse-ear cress)).